Consider the following 113-residue polypeptide: Nitrogenase vanadium-iron protein delta chain (113 aa).

In terms of assembly, hexamer of two alpha, two beta, and two delta chains. Iron-sulfur cluster is required as a cofactor. The cofactor is vanadium cation.

The enzyme catalyses N2 + 8 reduced [2Fe-2S]-[ferredoxin] + 16 ATP + 16 H2O = H2 + 8 oxidized [2Fe-2S]-[ferredoxin] + 2 NH4(+) + 16 ADP + 16 phosphate + 6 H(+). Its function is as follows. The key enzymatic reactions in nitrogen fixation are catalyzed by the nitrogenase complex, which has 2 components: the iron protein (component 2) and a component 1 which is either a molybdenum-iron protein, a vanadium-iron, or an iron-iron protein. The protein is Nitrogenase vanadium-iron protein delta chain (vnfG) of Azotobacter salinestris.